Here is a 680-residue protein sequence, read N- to C-terminus: Probable inactive DNA (cytosine-5)-methyltransferase DRM3 (680 aa).

The tract at residues 1–24 is disordered; that stretch reads MVKVEDDVEGSGINASVGDLRDAA. The UBA 1 domain maps to 45 to 86; sequence SSSSHVRSQFIGMGFSPMLVDRVLQKHGDRDSDTILEALLSQ. Residues 91 to 113 form a disordered region; the sequence is KSGSESGSLGDLFDSDNEENSSH. The region spanning 194–235 is the UBA 2 domain; that stretch reads SLFGVMDKTLHLLQMGFTEEEVSSVIDKAGPEATVLELADTI. One can recognise an SAM-dependent MTase DRM-type domain in the interval 336-663; the sequence is IRRNVRSDVA…QRVKHIMGRL (328 aa).

This sequence belongs to the class I-like SAM-binding methyltransferase superfamily. DRM-methyltransferase family.

It is found in the nucleus. In terms of biological role, involved in de novo DNA methylation. Involved in RNA-directed DNA methylation (RdDM). This chain is Probable inactive DNA (cytosine-5)-methyltransferase DRM3, found in Oryza sativa subsp. japonica (Rice).